We begin with the raw amino-acid sequence, 288 residues long: Translocon-associated protein subunit alpha (288 aa).

The signal sequence occupies residues 1–28 (MFNFGSKILVLFLVAFPCGLISFGRVSA). Topologically, residues 29 to 208 (DSESAEDIFP…ELEEGLDGET (180 aa)) are lumenal. Positions 34–69 (EDIFPDSTVDEEEEEEEDEVLVEEDQVPGSETEDDI) are disordered. Asn137 and Asn192 each carry an N-linked (GlcNAc...) asparagine glycan. A helical membrane pass occupies residues 209–229 (IFMYIFLTGLVVLAVFGMYQV). Residues 230 to 288 (LESRTRKRFPVKVETGTGGMNGVDISWIPQETLNIMSKASASPKASPRKRTKRAVGVDQ) lie on the Cytoplasmic side of the membrane. Residues 267-288 (KASASPKASPRKRTKRAVGVDQ) form a disordered region.

It belongs to the TRAP-alpha family. Heterotetramer of TRAP-alpha, TRAP-beta, TRAP-delta and TRAP-gamma. Post-translationally, phosphorylated in its cytoplasmic tail.

Its subcellular location is the endoplasmic reticulum membrane. Its function is as follows. TRAP proteins are part of a complex whose function is to bind calcium to the ER membrane and thereby regulate the retention of ER resident proteins. May be involved in the recycling of the translocation apparatus after completion of the translocation process or may function as a membrane-bound chaperone facilitating folding of translocated proteins. This is Translocon-associated protein subunit alpha (ssr1) from Oncorhynchus mykiss (Rainbow trout).